The primary structure comprises 99 residues: Putative type 4B encapsulin shell protein PF1875 (99 aa).

It belongs to the encapsulin family. Family 4B subfamily. As to quaternary structure, may self-assemble into facets and potentially into larger complexes.

The protein localises to the encapsulin nanocompartment. May be the encapsulin shell protein in a type 4 A-domain encapsulin nanocompartment system. Its cargo may be upstream glyceraldehyde-3-phosphate dehydrogenase (AC P61879). This Pyrococcus furiosus (strain ATCC 43587 / DSM 3638 / JCM 8422 / Vc1) protein is Putative type 4B encapsulin shell protein PF1875.